The following is a 178-amino-acid chain: MQSADNLIWIDLEMTGLDVDSCKIIEIAAIITDKDLNIIAEAEPIAIYQPDEVLANMNEWCIKTHTETGLTQRVKDSKISTEAAEQQILEFIRKFVPYQSSPLCGNSIWQDRRFLAKYMPNIDEYCHYRMLDVTTLKLLNQYWGDGKSFEKKNTHKALDDIRESIAELKFYRQELLSI.

In terms of domain architecture, Exonuclease spans 7–168 (LIWIDLEMTG…DDIRESIAEL (162 aa)). The active site involves Tyr128.

This sequence belongs to the oligoribonuclease family.

Its subcellular location is the cytoplasm. Its function is as follows. 3'-to-5' exoribonuclease specific for small oligoribonucleotides. The chain is Oligoribonuclease from Francisella tularensis subsp. holarctica (strain OSU18).